Here is a 306-residue protein sequence, read N- to C-terminus: Manganese-binding lipoprotein MntA (306 aa).

An N-terminal signal peptide occupies residues 1–18; it reads MRQGLMAAVLFATFALTG. A lipid anchor (N-palmitoyl cysteine) is attached at Cys19. Cys19 carries the S-diacylglycerol cysteine lipid modification. Mn(2+) is bound by residues His66, His132, His198, and Asp278.

The protein belongs to the bacterial solute-binding protein 9 family. As to quaternary structure, the complex is probably composed of two ATP-binding proteins (MntB), two transmembrane proteins (MntC and MntD) and a solute-binding protein (MntA). Interacts with FloT.

The protein resides in the cell membrane. It localises to the membrane raft. Probably part of ATP-binding cassette (ABC) transport system MntABCD involved in manganese import. Binds manganese and delivers it to the membrane permease for translocation into the cytoplasm. The polypeptide is Manganese-binding lipoprotein MntA (Bacillus subtilis (strain 168)).